A 384-amino-acid chain; its full sequence is N-acetylneuraminate epimerase (384 aa).

The first 24 residues, 1 to 24 (MMKTKYLLLPLLASSSLLSHMAFA), serve as a signal peptide directing secretion. 7 Kelch repeats span residues 46–90 (KVYV…TVVG), 92–145 (NIFV…YSPD), 147–184 (KQVLFFGGYSKPLFDKYLADITRTDKKAQPEQWQKIVD), 185–230 (DYMG…VIDG), 233–281 (ITLI…IAGA), 303–352 (AQFE…SVKG), and 354–383 (VLMVGGERADRTASTKVYLVGLNNNQIDIV). The active-site Proton acceptor is the Glu239.

Belongs to the NanM family. Homodimer.

The protein localises to the periplasm. It carries out the reaction N-acetyl-alpha-neuraminate = N-acetyl-beta-neuraminate. Converts alpha-N-acetylneuranimic acid (Neu5Ac) to the beta-anomer, accelerating the equilibrium between the alpha- and beta-anomers. Probably facilitates sialidase-negative bacteria to compete successfully for limited amounts of extracellular Neu5Ac, which is likely taken up in the beta-anomer. In addition, the rapid removal of sialic acid from solution might be advantageous to the bacterium to damp down host responses. This chain is N-acetylneuraminate epimerase, found in Vibrio vulnificus (strain YJ016).